Consider the following 249-residue polypeptide: MIDKAEGLVLRTVVYGESNKIITLLTREYGKLAVMARGAKKPGSRFNAASQPFVRAIYVYPRSRGLGQLKSADVITGYSKIRQDVFLMAYAMYLLELADKALDERVPQPALYDLFVDGLEAMDEGLDPDVVSFIVELRLLRHLGIAPHLNGCTVCGSVEAPFAFSLNHGGLLCRRHRQEDEHAVSLTESVAKMLYVFSVYDFSRIGTVDVKPETKRLLRQIMDAYMERYSGLRLRSKRVLDQLLNLGDD.

This sequence belongs to the RecO family.

Its function is as follows. Involved in DNA repair and RecF pathway recombination. This chain is DNA repair protein RecO, found in Exiguobacterium sibiricum (strain DSM 17290 / CCUG 55495 / CIP 109462 / JCM 13490 / 255-15).